A 123-amino-acid polypeptide reads, in one-letter code: MTTPTPTTLKHHATTILTTLVNDRQTAAIEHLLHPTITLKHNDLPAMSKSELIAFWPEVLAQSPHFRVQIRDVIAEGNKVWVYSRVEGRLGEGVMDDFHMMVFDEEGLVVRSTGVQRVVEGEM.

This sequence belongs to the aurE cyclase family.

Its pathway is mycotoxin biosynthesis. Its function is as follows. Probable cyclase; part of the gene cluster that mediates the biosynthesis of ochratoxin A (OTA), a mycotoxin composed of a chlorinated type I polyketide dihydroisocoumarin moiety linked to L-phenylalanine, and demonstrated to have nephrotoxic, immunotoxic, genotoxic, neurotoxic, and teratogenic properties. OtaY is probably involved in the polyketide cyclization. The pathway begins with the highly reducing polyketide synthase otaA that catalyzes the formation of the isocoumarin group during the initial stages of biosynthesis, starting from one acetate and 4 malonate units, to originate the characteristic pentaketide skeleton 7-methylmellein (7-MM) of the OTA molecule. The newly identified cyclase otaY might be involved in the polyketide cyclization reaction during the initial steps of the OTA biosynthesis. 7-MM is then oxidized into 7-carboxymellein (also called ochratoxin beta) by the cytochrome P450 monooxygenase otaC. The NRPS encoded by the otaB gene is involved in the linking of phenylalanine to the dihydroisocoumarin ring. The reaction catalyzed by NRPS results in the production of ochratoxin B (OTB), which is the non-chlorinated analog of OTA and which subsequently serves as the substrate of the halogenase otaD for chlorination activity to form the final molecular structure of OTA, containing a chlorine atom in the C-5 position of the molecule. The protein is Probable cyclase otaY of Aspergillus carbonarius (strain ITEM 5010).